The following is a 459-amino-acid chain: Argininosuccinate lyase (459 aa).

The protein belongs to the lyase 1 family. Argininosuccinate lyase subfamily.

The protein resides in the cytoplasm. The catalysed reaction is 2-(N(omega)-L-arginino)succinate = fumarate + L-arginine. It functions in the pathway amino-acid biosynthesis; L-arginine biosynthesis; L-arginine from L-ornithine and carbamoyl phosphate: step 3/3. The sequence is that of Argininosuccinate lyase from Methylobacterium radiotolerans (strain ATCC 27329 / DSM 1819 / JCM 2831 / NBRC 15690 / NCIMB 10815 / 0-1).